Consider the following 177-residue polypeptide: Peptide methionine sulfoxide reductase MsrA (177 aa).

Residue cysteine 11 is part of the active site.

The protein belongs to the MsrA Met sulfoxide reductase family.

The catalysed reaction is L-methionyl-[protein] + [thioredoxin]-disulfide + H2O = L-methionyl-(S)-S-oxide-[protein] + [thioredoxin]-dithiol. It catalyses the reaction [thioredoxin]-disulfide + L-methionine + H2O = L-methionine (S)-S-oxide + [thioredoxin]-dithiol. Its function is as follows. Has an important function as a repair enzyme for proteins that have been inactivated by oxidation. Catalyzes the reversible oxidation-reduction of methionine sulfoxide in proteins to methionine. In Picrophilus torridus (strain ATCC 700027 / DSM 9790 / JCM 10055 / NBRC 100828 / KAW 2/3), this protein is Peptide methionine sulfoxide reductase MsrA.